The sequence spans 399 residues: Nicotinate phosphoribosyltransferase (399 aa).

H221 bears the Phosphohistidine; by autocatalysis mark.

It belongs to the NAPRTase family. Transiently phosphorylated on a His residue during the reaction cycle. Phosphorylation strongly increases the affinity for substrates and increases the rate of nicotinate D-ribonucleotide production. Dephosphorylation regenerates the low-affinity form of the enzyme, leading to product release.

It carries out the reaction nicotinate + 5-phospho-alpha-D-ribose 1-diphosphate + ATP + H2O = nicotinate beta-D-ribonucleotide + ADP + phosphate + diphosphate. It participates in cofactor biosynthesis; NAD(+) biosynthesis; nicotinate D-ribonucleotide from nicotinate: step 1/1. Functionally, catalyzes the synthesis of beta-nicotinate D-ribonucleotide from nicotinate and 5-phospho-D-ribose 1-phosphate at the expense of ATP. The sequence is that of Nicotinate phosphoribosyltransferase from Buchnera aphidicola subsp. Acyrthosiphon pisum (strain 5A).